We begin with the raw amino-acid sequence, 458 residues long: Ammonium transporter Rh type B (458 aa).

Residues 1–13 are Cytoplasmic-facing; the sequence is MAGSPSRAAGRRL. The helical transmembrane segment at 14–34 threads the bilayer; that stretch reads QLPLLCLFLQGATAVLFAVFV. Over 35-61 the chain is Extracellular; it reads RYNHKTDAALWHRSNHSNADNEFYFRY. Asparagine 49 is a glycosylation site (N-linked (GlcNAc...) asparagine). A helical transmembrane segment spans residues 62–82; it reads PSFQDVHAMVFVGFGFLMVFL. At 83–86 the chain is on the cytoplasmic side; the sequence is QRYG. The helical transmembrane segment at 87–107 threads the bilayer; sequence FSSVGFTFLLAAFALQWSTLV. At 108 to 124 the chain is on the extracellular side; that stretch reads QGFLHSFHGGHIHVGVE. The helical transmembrane segment at 125 to 145 threads the bilayer; it reads SMINADFCAGAVLISFGAVLG. The Cytoplasmic segment spans residues 146-149; it reads KTGP. Residues 150 to 170 traverse the membrane as a helical segment; sequence TQLLLMALLEVVLFGINEFVL. Residues 171–178 lie on the Extracellular side of the membrane; the sequence is LHLLGVRD. A helical transmembrane segment spans residues 179–201; the sequence is AGGSMTIHTFGAYFGLVLSRVLY. Topologically, residues 202 to 219 are cytoplasmic; it reads RPQLEKSKHRQGSVYHSD. The chain crosses the membrane as a helical span at residues 220-240; the sequence is LFAMIGTIFLWIFWPSFNAAL. Residues 241–251 lie on the Extracellular side of the membrane; it reads TALGAGQHRTA. Residues 252 to 272 traverse the membrane as a helical segment; it reads LNTYYSLAASTLGTFALSALV. The Cytoplasmic portion of the chain corresponds to 273–282; that stretch reads GEDGRLDMVH. The helical transmembrane segment at 283–303 threads the bilayer; the sequence is IQNAALAGGVVVGTSSEMMLT. Proline 304 is a topological domain (extracellular). Residues 305-325 traverse the membrane as a helical segment; the sequence is FGALAAGFLAGTVSTLGYKFF. Over 326–346 the chain is Cytoplasmic; sequence TPILESKFKVQDTCGVHNLHG. Residues 347–367 form a helical membrane-spanning segment; sequence MPGVLGALLGVLVAGLATHEA. Topologically, residues 368 to 393 are extracellular; the sequence is YGDGLESVFPLIAEGQRSATSQAMHQ. A helical transmembrane segment spans residues 394–414; it reads LFGLFVTLMFASVGGGLGGLL. Over 415-458 the chain is Cytoplasmic; that stretch reads LKLPFLDSPPDSQHYEDQVHWQVPGEHEDKAQRPLRVEEADTQA. The interval 416–424 is interaction with ANK3; sequence KLPFLDSPP. Residues 436 to 458 are disordered; sequence QVPGEHEDKAQRPLRVEEADTQA.

It belongs to the ammonium transporter (TC 2.A.49) family. Rh subfamily. Interacts (via C-terminus) with ANK2 and ANK3; required for targeting to the basolateral membrane. Post-translationally, N-glycosylated. As to expression, specifically expressed in kidney. Also detected in liver and ovary.

It is found in the cell membrane. Its subcellular location is the basolateral cell membrane. The enzyme catalyses NH4(+)(in) = NH4(+)(out). The catalysed reaction is methylamine(out) = methylamine(in). It catalyses the reaction CO2(out) = CO2(in). Functionally, ammonium transporter involved in the maintenance of acid-base homeostasis. Transports ammonium and its related derivative methylammonium across the basolateral plasma membrane of epithelial cells likely contributing to renal transepithelial ammonia transport and ammonia metabolism. May transport either NH4(+) or NH3 ammonia species predominantly mediating an electrogenic NH4(+) transport. May act as a CO2 channel providing for renal acid secretion. This chain is Ammonium transporter Rh type B, found in Homo sapiens (Human).